Reading from the N-terminus, the 382-residue chain is Cyclopropane-fatty-acyl-phospholipid synthase (382 aa).

Residues 137 to 138 (YS), 171 to 179 (VLDIGCGWG), and 197 to 202 (TISAEQ) contribute to the S-adenosyl-L-methionine site. The active site involves Cys354.

The protein belongs to the CFA/CMAS family.

The protein localises to the cytoplasm. The catalysed reaction is a 1-acyl-2-(9Z)-enoyl-sn-glycero-3-phospholipid + S-adenosyl-L-methionine = a 1-acyl-2-(9-cyclopronane)-acyl-sn-glycero-3-phospholipid + S-adenosyl-L-homocysteine + H(+). Its pathway is lipid metabolism; fatty acid biosynthesis. Transfers a methylene group from S-adenosyl-L-methionine to the cis double bond of an unsaturated fatty acid chain resulting in the replacement of the double bond with a methylene bridge. In Escherichia coli O6:H1 (strain CFT073 / ATCC 700928 / UPEC), this protein is Cyclopropane-fatty-acyl-phospholipid synthase (cfa).